A 683-amino-acid polypeptide reads, in one-letter code: DNA ligase (683 aa).

Residues 29–33 (DAEFD), 79–80 (SL), and E109 contribute to the NAD(+) site. Residue K111 is the N6-AMP-lysine intermediate of the active site. Residues R132, E172, K288, and K312 each coordinate NAD(+). Residues C406, C409, C425, and C431 each contribute to the Zn(2+) site. The BRCT domain maps to 595 to 683 (SVPRTLAGVT…GPPAEAGEPT (89 aa)).

This sequence belongs to the NAD-dependent DNA ligase family. LigA subfamily. Requires Mg(2+) as cofactor. Mn(2+) serves as cofactor.

It carries out the reaction NAD(+) + (deoxyribonucleotide)n-3'-hydroxyl + 5'-phospho-(deoxyribonucleotide)m = (deoxyribonucleotide)n+m + AMP + beta-nicotinamide D-nucleotide.. Its function is as follows. DNA ligase that catalyzes the formation of phosphodiester linkages between 5'-phosphoryl and 3'-hydroxyl groups in double-stranded DNA using NAD as a coenzyme and as the energy source for the reaction. It is essential for DNA replication and repair of damaged DNA. This is DNA ligase from Mycobacterium ulcerans (strain Agy99).